Consider the following 270-residue polypeptide: Regulatory protein RecX (270 aa).

This sequence belongs to the RecX family.

The protein localises to the cytoplasm. In terms of biological role, modulates RecA activity. The sequence is that of Regulatory protein RecX from Bacillus anthracis (strain A0248).